Consider the following 1373-residue polypeptide: DNA-directed RNA polymerase subunit beta (1373 aa).

The protein belongs to the RNA polymerase beta chain family. In terms of assembly, the RNAP catalytic core consists of 2 alpha, 1 beta, 1 beta' and 1 omega subunit. When a sigma factor is associated with the core the holoenzyme is formed, which can initiate transcription.

It catalyses the reaction RNA(n) + a ribonucleoside 5'-triphosphate = RNA(n+1) + diphosphate. Its function is as follows. DNA-dependent RNA polymerase catalyzes the transcription of DNA into RNA using the four ribonucleoside triphosphates as substrates. The sequence is that of DNA-directed RNA polymerase subunit beta from Rhodopseudomonas palustris (strain BisB18).